The chain runs to 244 residues: Ubiquinone/menaquinone biosynthesis C-methyltransferase UbiE (244 aa).

Residues Thr70, Asp91, and 117–118 (DA) contribute to the S-adenosyl-L-methionine site.

It belongs to the class I-like SAM-binding methyltransferase superfamily. MenG/UbiE family.

It carries out the reaction a 2-demethylmenaquinol + S-adenosyl-L-methionine = a menaquinol + S-adenosyl-L-homocysteine + H(+). It catalyses the reaction a 2-methoxy-6-(all-trans-polyprenyl)benzene-1,4-diol + S-adenosyl-L-methionine = a 5-methoxy-2-methyl-3-(all-trans-polyprenyl)benzene-1,4-diol + S-adenosyl-L-homocysteine + H(+). The protein operates within quinol/quinone metabolism; menaquinone biosynthesis; menaquinol from 1,4-dihydroxy-2-naphthoate: step 2/2. It participates in cofactor biosynthesis; ubiquinone biosynthesis. In terms of biological role, methyltransferase required for the conversion of demethylmenaquinol (DMKH2) to menaquinol (MKH2) and the conversion of 2-polyprenyl-6-methoxy-1,4-benzoquinol (DDMQH2) to 2-polyprenyl-3-methyl-6-methoxy-1,4-benzoquinol (DMQH2). This chain is Ubiquinone/menaquinone biosynthesis C-methyltransferase UbiE, found in Nitrosospira multiformis (strain ATCC 25196 / NCIMB 11849 / C 71).